Consider the following 383-residue polypeptide: UDP-N-acetylglucosamine 2-epimerase (383 aa).

Belongs to the UDP-N-acetylglucosamine 2-epimerase family.

It catalyses the reaction UDP-N-acetyl-alpha-D-glucosamine = UDP-N-acetyl-alpha-D-mannosamine. Its pathway is capsule biogenesis; capsule polysaccharide biosynthesis. In terms of biological role, non-hydrolyzing C2-epimerase involved in the biosynthesis of capsular polysaccharides. Catalyzes the C2 epimerization of UDP-N-acetylglucosamine (UDP-GlcNAc) to form UDP-N-acetylmannosamine (UDP-ManNAc). In Campylobacter jejuni, this protein is UDP-N-acetylglucosamine 2-epimerase.